Reading from the N-terminus, the 285-residue chain is Cell division protein ZipA (285 aa).

Residue Met-1 is a topological domain, periplasmic. A helical membrane pass occupies residues 2 to 22 (EIGLREWLIVIGIVVIGGILF). Residues 23–285 (DGWRRMRGSK…FERRQLTHKR (263 aa)) are Cytoplasmic-facing. The disordered stretch occupies residues 49 to 88 (AVSENSELLGPSRSVDFPQGAGFEPDEENLPSLSVRGPSR).

The protein belongs to the ZipA family. Interacts with FtsZ via their C-terminal domains.

It is found in the cell inner membrane. In terms of biological role, essential cell division protein that stabilizes the FtsZ protofilaments by cross-linking them and that serves as a cytoplasmic membrane anchor for the Z ring. Also required for the recruitment to the septal ring of downstream cell division proteins. This is Cell division protein ZipA from Azotobacter vinelandii (strain DJ / ATCC BAA-1303).